A 325-amino-acid chain; its full sequence is MATH domain and coiled-coil domain-containing protein At3g58430 (325 aa).

The 126-residue stretch at 6 to 131 (HKKFCWIIKN…KGDFKIIAEV (126 aa)) folds into the MATH domain. The stretch at 258 to 306 (FKVDWLEKKLDQVKDKKEREQSGLARLHELEEYLLKLKQKCSNLDLLVE) forms a coiled coil.

In Arabidopsis thaliana (Mouse-ear cress), this protein is MATH domain and coiled-coil domain-containing protein At3g58430.